Reading from the N-terminus, the 526-residue chain is MNPIDSPAWRALAAHAEAIRPLHLRDLFATDPQRFELFSLHHDGLLLDYSKQRVSVETMALLRAYAETADVTGWRRRMLDGESINHTEGRAVRHMSLRAGDQAPAEVRAALARQQAFCESIHNGVWRGFSGERITDVVNIGIGGSDLGPRMAALALSARQQPDIAVHFIANVDSADIAPLLASLNPRTTLFIVASKTFTTLETLTNARTARDWLLATAGQESAIARHFVAISTNLELTKQFGIADDNVFEFWDWVGGRFSIWSAIGLSLALAIGWKNFEQLQAGARAMDRHFIDTPADENLPLTLALLSLWNTNFLGASTEAMLPYSQSLHLFPAYLQQLEMESNGKQIDRDGKPLNIATSPVIWGESGTNGQHSFYQLFHQGGHLIPADFVALREADFPLPGHHASLLANCLAQSAALAFGQTAEEVRAAGIPEALIPYKVFPGNQPSNTLLLPSLDPYTLGQLLALFEHKVFCLGVLWNLNAFDQWGVELGKQLAGQLTPLIEGNGDLSAFDSSTRGLITALKG.

Residue Glu343 is the Proton donor of the active site. Catalysis depends on residues His374 and Lys494.

This sequence belongs to the GPI family.

It is found in the cytoplasm. It catalyses the reaction alpha-D-glucose 6-phosphate = beta-D-fructose 6-phosphate. Its pathway is carbohydrate biosynthesis; gluconeogenesis. The protein operates within carbohydrate degradation; glycolysis; D-glyceraldehyde 3-phosphate and glycerone phosphate from D-glucose: step 2/4. Its function is as follows. Catalyzes the reversible isomerization of glucose-6-phosphate to fructose-6-phosphate. This Dechloromonas aromatica (strain RCB) protein is Glucose-6-phosphate isomerase.